A 77-amino-acid polypeptide reads, in one-letter code: MPGCTSRLLPEGPFSRNQALAVTTAYLNVLIEDDQGTHFRLVIRNAEGQLRWRCWNFEPDAGKQLNPYLASEGILRQ.

The protein belongs to the UPF0401 family.

The protein is UPF0401 protein ECP_3010 of Escherichia coli O6:K15:H31 (strain 536 / UPEC).